Reading from the N-terminus, the 353-residue chain is 3-isopropylmalate dehydrogenase (353 aa).

The substrate site is built by Arg97, Arg107, Arg135, and Asp219. 3 residues coordinate Mg(2+): Asp219, Asp243, and Asp247.

This sequence belongs to the isocitrate and isopropylmalate dehydrogenases family. LeuB type 1 subfamily. In terms of assembly, homodimer. Requires Mg(2+) as cofactor. It depends on Mn(2+) as a cofactor.

It is found in the cytoplasm. The enzyme catalyses (2R,3S)-3-isopropylmalate + NAD(+) = 4-methyl-2-oxopentanoate + CO2 + NADH. The protein operates within amino-acid biosynthesis; L-leucine biosynthesis; L-leucine from 3-methyl-2-oxobutanoate: step 3/4. Functionally, catalyzes the oxidation of 3-carboxy-2-hydroxy-4-methylpentanoate (3-isopropylmalate) to 3-carboxy-4-methyl-2-oxopentanoate. The product decarboxylates to 4-methyl-2 oxopentanoate. This Bacteroides fragilis (strain ATCC 25285 / DSM 2151 / CCUG 4856 / JCM 11019 / LMG 10263 / NCTC 9343 / Onslow / VPI 2553 / EN-2) protein is 3-isopropylmalate dehydrogenase.